We begin with the raw amino-acid sequence, 657 residues long: Probable potassium transport system protein Kup (657 aa).

The next 12 helical transmembrane spans lie at 15–35 (SFLI…LYVM), 48–68 (ITPD…TLLT), 100–120 (WLII…MLTP), 147–167 (IIII…HFGT), 173–193 (IFGP…IVNL), 219–239 (LGFF…ALYS), 251–271 (LTWP…AAWI), 292–312 (MMPS…AIIA), 348–368 (IYMP…VLYF), 378–398 (YGLS…NYLL), 403–423 (PLPI…SFLI), and 431–451 (KGGF…YIWI).

This sequence belongs to the HAK/KUP transporter (TC 2.A.72) family.

Its subcellular location is the cell membrane. The enzyme catalyses K(+)(in) + H(+)(in) = K(+)(out) + H(+)(out). Its function is as follows. Transport of potassium into the cell. Likely operates as a K(+):H(+) symporter. This Clostridium perfringens (strain SM101 / Type A) protein is Probable potassium transport system protein Kup.